Here is a 730-residue protein sequence, read N- to C-terminus: Elongation factor 2 (730 aa).

The region spanning 19–260 is the tr-type G domain; sequence EKIRNIGIVA…MVIRFLPNPL (242 aa). Residues 28–35, 94–98, and 148–151 contribute to the GTP site; these read AHIDHGKT, DTPGH, and NKVD. The residue at position 596 (histidine 596) is a Diphthamide.

Belongs to the TRAFAC class translation factor GTPase superfamily. Classic translation factor GTPase family. EF-G/EF-2 subfamily.

It localises to the cytoplasm. Catalyzes the GTP-dependent ribosomal translocation step during translation elongation. During this step, the ribosome changes from the pre-translocational (PRE) to the post-translocational (POST) state as the newly formed A-site-bound peptidyl-tRNA and P-site-bound deacylated tRNA move to the P and E sites, respectively. Catalyzes the coordinated movement of the two tRNA molecules, the mRNA and conformational changes in the ribosome. The protein is Elongation factor 2 (fusA) of Methanosarcina thermophila.